The primary structure comprises 371 residues: Putative 8-amino-7-oxononanoate synthase (371 aa).

Arg-21 is a substrate binding site. Pyridoxal 5'-phosphate is bound at residue 108-109 (GY). His-133 contributes to the substrate binding site. Residues Ser-180, 205 to 208 (DDAH), and 234 to 237 (TLSK) each bind pyridoxal 5'-phosphate. The residue at position 237 (Lys-237) is an N6-(pyridoxal phosphate)lysine. Position 333 (Thr-333) interacts with substrate.

The protein belongs to the class-II pyridoxal-phosphate-dependent aminotransferase family. BioF subfamily. In terms of assembly, homodimer. Requires pyridoxal 5'-phosphate as cofactor.

The catalysed reaction is 6-carboxyhexanoyl-[ACP] + L-alanine + H(+) = (8S)-8-amino-7-oxononanoate + holo-[ACP] + CO2. Its pathway is cofactor biosynthesis; biotin biosynthesis. Functionally, catalyzes the decarboxylative condensation of pimeloyl-[acyl-carrier protein] and L-alanine to produce 8-amino-7-oxononanoate (AON), [acyl-carrier protein], and carbon dioxide. This chain is Putative 8-amino-7-oxononanoate synthase (bioF), found in Bacillus subtilis subsp. natto.